A 637-amino-acid polypeptide reads, in one-letter code: Zinc-transporting ATPase (637 aa).

The next 4 helical transmembrane spans lie at 43-63 (GWLL…AFVI), 89-109 (IFAA…ILIF), 258-278 (GVLI…GWSW), and 286-306 (MVFM…PAAL). The active-site 4-aspartylphosphate intermediate is the Asp-337. Residues Asp-535 and Asp-539 each contribute to the Mg(2+) site. The chain crosses the membrane as a helical span at residues 599–619 (VICLLICANFLQAMELPFGVI).

This sequence belongs to the cation transport ATPase (P-type) (TC 3.A.3) family. Type IB subfamily.

It is found in the cell membrane. The catalysed reaction is Zn(2+)(out) + ATP(in) + H2O(in) = Zn(2+)(in) + ADP(in) + phosphate(in) + H(+)(in). Couples the hydrolysis of ATP with the transport of zinc into the cell. Plays an important role in protecting cells against oxidative stress. ZosA-mediated zinc transport is required for post-transcriptional control of comK and competence development. The sequence is that of Zinc-transporting ATPase (zosA) from Bacillus subtilis (strain 168).